A 129-amino-acid polypeptide reads, in one-letter code: MYDNLKSLGVNHPDDIDRYSLRQEANNDILKIYFRRDKGELFAKSVKFKYPRQRKTVVSYNAAEGYREINGISPNLRYVIDELDQICLRDQTEVDLKNKILDDLRHLESVVSNKIAEIEADLEKLTRQK.

The protein belongs to the UPF0325 family.

This Sodalis glossinidius (strain morsitans) protein is UPF0325 protein SG1947.